A 304-amino-acid polypeptide reads, in one-letter code: Small ribosomal subunit protein uS3 (304 aa).

In terms of domain architecture, KH type-2 spans 17 to 86 (MDEYFAKQLS…NPQIDAQEVK (70 aa)).

The protein belongs to the universal ribosomal protein uS3 family. In terms of assembly, part of the 30S ribosomal subunit.

In terms of biological role, binds the lower part of the 30S subunit head. This Methanococcoides burtonii (strain DSM 6242 / NBRC 107633 / OCM 468 / ACE-M) protein is Small ribosomal subunit protein uS3.